Reading from the N-terminus, the 214-residue chain is Pyridoxine/pyridoxamine 5'-phosphate oxidase (214 aa).

Residues 8–11 (RTNY) and Lys66 each bind substrate. FMN-binding positions include 61 to 66 (RIVLIK), 76 to 77 (FT), Arg82, Lys83, and Gln105. Substrate contacts are provided by Tyr123, Arg127, and Ser131. FMN is bound by residues 140–141 (QS) and Trp184. Substrate is bound at residue 190-192 (RLH). Arg194 is an FMN binding site.

Belongs to the pyridoxamine 5'-phosphate oxidase family. Homodimer. It depends on FMN as a cofactor.

It catalyses the reaction pyridoxamine 5'-phosphate + O2 + H2O = pyridoxal 5'-phosphate + H2O2 + NH4(+). It carries out the reaction pyridoxine 5'-phosphate + O2 = pyridoxal 5'-phosphate + H2O2. It participates in cofactor metabolism; pyridoxal 5'-phosphate salvage; pyridoxal 5'-phosphate from pyridoxamine 5'-phosphate: step 1/1. Its pathway is cofactor metabolism; pyridoxal 5'-phosphate salvage; pyridoxal 5'-phosphate from pyridoxine 5'-phosphate: step 1/1. Catalyzes the oxidation of either pyridoxine 5'-phosphate (PNP) or pyridoxamine 5'-phosphate (PMP) into pyridoxal 5'-phosphate (PLP). In Burkholderia thailandensis (strain ATCC 700388 / DSM 13276 / CCUG 48851 / CIP 106301 / E264), this protein is Pyridoxine/pyridoxamine 5'-phosphate oxidase.